A 63-amino-acid chain; its full sequence is UPF0337 protein Atu0782 (63 aa).

A disordered region spans residues 1 to 63; the sequence is MGSTSDKIAG…DAVKGAVDRM (63 aa). Residues 51 to 63 show a composition bias toward basic and acidic residues; that stretch reads KAKDAVKGAVDRM.

The protein belongs to the UPF0337 (CsbD) family.

The protein is UPF0337 protein Atu0782 of Agrobacterium fabrum (strain C58 / ATCC 33970) (Agrobacterium tumefaciens (strain C58)).